Reading from the N-terminus, the 508-residue chain is Photosystem II CP47 reaction center protein (508 aa).

A run of 6 helical transmembrane segments spans residues 21–36, 101–115, 140–156, 203–218, 237–252, and 457–472; these read AVHI…WAGS, ILFS…IWHW, GIHL…FGAF, IAAG…FHLS, VLSS…AFVV, and SFAL…HGAR.

This sequence belongs to the PsbB/PsbC family. PsbB subfamily. In terms of assembly, PSII is composed of 1 copy each of membrane proteins PsbA, PsbB, PsbC, PsbD, PsbE, PsbF, PsbH, PsbI, PsbJ, PsbK, PsbL, PsbM, PsbT, PsbX, PsbY, PsbZ, Psb30/Ycf12, at least 3 peripheral proteins of the oxygen-evolving complex and a large number of cofactors. It forms dimeric complexes. Binds multiple chlorophylls. PSII binds additional chlorophylls, carotenoids and specific lipids. is required as a cofactor.

It localises to the plastid. The protein resides in the chloroplast thylakoid membrane. In terms of biological role, one of the components of the core complex of photosystem II (PSII). It binds chlorophyll and helps catalyze the primary light-induced photochemical processes of PSII. PSII is a light-driven water:plastoquinone oxidoreductase, using light energy to abstract electrons from H(2)O, generating O(2) and a proton gradient subsequently used for ATP formation. In Oenothera biennis (German evening primrose), this protein is Photosystem II CP47 reaction center protein.